Reading from the N-terminus, the 433-residue chain is Glucose-1-phosphate adenylyltransferase (433 aa).

Alpha-D-glucose 1-phosphate is bound by residues tyrosine 117, glycine 182, 197–198 (EK), and serine 215.

It belongs to the bacterial/plant glucose-1-phosphate adenylyltransferase family. In terms of assembly, homotetramer.

It catalyses the reaction alpha-D-glucose 1-phosphate + ATP + H(+) = ADP-alpha-D-glucose + diphosphate. The protein operates within glycan biosynthesis; glycogen biosynthesis. Its function is as follows. Involved in the biosynthesis of ADP-glucose, a building block required for the elongation reactions to produce glycogen. Catalyzes the reaction between ATP and alpha-D-glucose 1-phosphate (G1P) to produce pyrophosphate and ADP-Glc. The polypeptide is Glucose-1-phosphate adenylyltransferase (Nitrosomonas europaea (strain ATCC 19718 / CIP 103999 / KCTC 2705 / NBRC 14298)).